A 193-amino-acid polypeptide reads, in one-letter code: MALEALNSPRLVEDPLRFNGVEQWTKCKKRSKRSRSDLHHNHRLTEEEYLAFCLMLLARDGGDLDSVTVAEKPSYKCGVCYKTFSSYQALGGHKASHRSLYGGGENDKSTPSTAVKSHVCSVCGKSFATGQALGGHKRCHYDGGVSNSEGVGSTSHVSSSSHRGFDLNIIPVQGFSPDDEVMSPMATKKPRLK.

2 consecutive C2H2-type zinc fingers follow at residues 75–97 (YKCGVCYKTFSSYQALGGHKASH) and 118–140 (HVCSVCGKSFATGQALGGHKRCH).

As to expression, expressed in roots.

The protein localises to the nucleus. Functionally, transcriptional repressor probably involved in abiotic stress responses. Binds DNA in a sequence-specific manner and can repress the transactivation activity of other transcription factors. In Arabidopsis thaliana (Mouse-ear cress), this protein is Zinc finger protein AZF3 (AZF3).